We begin with the raw amino-acid sequence, 97 residues long: Large ribosomal subunit protein bL31B (97 aa).

It belongs to the bacterial ribosomal protein bL31 family. Type B subfamily. As to quaternary structure, part of the 50S ribosomal subunit.

This Mycolicibacterium paratuberculosis (strain ATCC BAA-968 / K-10) (Mycobacterium paratuberculosis) protein is Large ribosomal subunit protein bL31B (rpmE2).